A 403-amino-acid polypeptide reads, in one-letter code: Argininosuccinate synthase (403 aa).

9 to 17 (AYSGGLDTS) contacts ATP. Position 86 (tyrosine 86) interacts with L-citrulline. Glycine 116 is an ATP binding site. L-aspartate-binding residues include threonine 118, asparagine 122, and aspartate 123. Position 122 (asparagine 122) interacts with L-citrulline. Residues arginine 126, serine 174, serine 183, glutamate 259, and tyrosine 271 each coordinate L-citrulline.

It belongs to the argininosuccinate synthase family. Type 1 subfamily. As to quaternary structure, homotetramer.

It is found in the cytoplasm. It carries out the reaction L-citrulline + L-aspartate + ATP = 2-(N(omega)-L-arginino)succinate + AMP + diphosphate + H(+). It participates in amino-acid biosynthesis; L-arginine biosynthesis; L-arginine from L-ornithine and carbamoyl phosphate: step 2/3. The sequence is that of Argininosuccinate synthase from Shouchella clausii (strain KSM-K16) (Alkalihalobacillus clausii).